The chain runs to 62 residues: Large ribosomal subunit protein bL33 (62 aa).

The protein belongs to the bacterial ribosomal protein bL33 family.

This chain is Large ribosomal subunit protein bL33, found in Parabacteroides distasonis (strain ATCC 8503 / DSM 20701 / CIP 104284 / JCM 5825 / NCTC 11152).